Consider the following 156-residue polypeptide: Protein-export protein SecB (156 aa).

This sequence belongs to the SecB family. Homotetramer, a dimer of dimers. One homotetramer interacts with 1 SecA dimer.

It localises to the cytoplasm. Functionally, one of the proteins required for the normal export of preproteins out of the cell cytoplasm. It is a molecular chaperone that binds to a subset of precursor proteins, maintaining them in a translocation-competent state. It also specifically binds to its receptor SecA. This is Protein-export protein SecB from Aliivibrio fischeri (strain ATCC 700601 / ES114) (Vibrio fischeri).